Reading from the N-terminus, the 338-residue chain is Ketol-acid reductoisomerase (NADP(+)) (338 aa).

In terms of domain architecture, KARI N-terminal Rossmann spans 1 to 181 (MRVYYDKDCD…GGGRSGIIET (181 aa)). NADP(+) contacts are provided by residues 24–27 (YGSQ), Arg-47, Ser-50, Ser-52, and 82–85 (DENQ). Residue His-107 is part of the active site. Gly-133 serves as a coordination point for NADP(+). Residues 182–327 (TFKDETETDL…EKLRGMMPWI (146 aa)) form the KARI C-terminal knotted domain. Mg(2+) contacts are provided by Asp-190, Glu-194, Glu-226, and Glu-230. Ser-251 lines the substrate pocket.

This sequence belongs to the ketol-acid reductoisomerase family. It depends on Mg(2+) as a cofactor.

It catalyses the reaction (2R)-2,3-dihydroxy-3-methylbutanoate + NADP(+) = (2S)-2-acetolactate + NADPH + H(+). It carries out the reaction (2R,3R)-2,3-dihydroxy-3-methylpentanoate + NADP(+) = (S)-2-ethyl-2-hydroxy-3-oxobutanoate + NADPH + H(+). Its pathway is amino-acid biosynthesis; L-isoleucine biosynthesis; L-isoleucine from 2-oxobutanoate: step 2/4. The protein operates within amino-acid biosynthesis; L-valine biosynthesis; L-valine from pyruvate: step 2/4. Involved in the biosynthesis of branched-chain amino acids (BCAA). Catalyzes an alkyl-migration followed by a ketol-acid reduction of (S)-2-acetolactate (S2AL) to yield (R)-2,3-dihydroxy-isovalerate. In the isomerase reaction, S2AL is rearranged via a Mg-dependent methyl migration to produce 3-hydroxy-3-methyl-2-ketobutyrate (HMKB). In the reductase reaction, this 2-ketoacid undergoes a metal-dependent reduction by NADPH to yield (R)-2,3-dihydroxy-isovalerate. In Chromohalobacter salexigens (strain ATCC BAA-138 / DSM 3043 / CIP 106854 / NCIMB 13768 / 1H11), this protein is Ketol-acid reductoisomerase (NADP(+)).